The chain runs to 188 residues: FMN-dependent NADPH-azoreductase (188 aa).

This sequence belongs to the azoreductase type 2 family. Homotetramer. FMN serves as cofactor.

Functionally, catalyzes the reductive cleavage of azo bond in aromatic azo compounds to the corresponding amines. Requires NADPH, but not NADH, as an electron donor for its activity. The polypeptide is FMN-dependent NADPH-azoreductase (azo1) (Staphylococcus haemolyticus (strain JCSC1435)).